The following is a 949-amino-acid chain: Valine--tRNA ligase (949 aa).

The 'HIGH' region signature appears at Pro-45–His-55. The 'KMSKS' region signature appears at Lys-561–Ser-565. Lys-564 contacts ATP. Positions Glu-882 to Pro-949 form a coiled coil.

It belongs to the class-I aminoacyl-tRNA synthetase family. ValS type 1 subfamily. In terms of assembly, monomer.

The protein localises to the cytoplasm. The enzyme catalyses tRNA(Val) + L-valine + ATP = L-valyl-tRNA(Val) + AMP + diphosphate. In terms of biological role, catalyzes the attachment of valine to tRNA(Val). As ValRS can inadvertently accommodate and process structurally similar amino acids such as threonine, to avoid such errors, it has a 'posttransfer' editing activity that hydrolyzes mischarged Thr-tRNA(Val) in a tRNA-dependent manner. The polypeptide is Valine--tRNA ligase (Protochlamydia amoebophila (strain UWE25)).